The chain runs to 387 residues: ATP phosphoribosyltransferase regulatory subunit (387 aa).

This sequence belongs to the class-II aminoacyl-tRNA synthetase family. HisZ subfamily. In terms of assembly, heteromultimer composed of HisG and HisZ subunits.

The protein localises to the cytoplasm. The protein operates within amino-acid biosynthesis; L-histidine biosynthesis; L-histidine from 5-phospho-alpha-D-ribose 1-diphosphate: step 1/9. Required for the first step of histidine biosynthesis. May allow the feedback regulation of ATP phosphoribosyltransferase activity by histidine. This Ralstonia pickettii (strain 12J) protein is ATP phosphoribosyltransferase regulatory subunit.